The sequence spans 426 residues: Histidine--tRNA ligase (426 aa).

Belongs to the class-II aminoacyl-tRNA synthetase family.

The protein resides in the cytoplasm. The catalysed reaction is tRNA(His) + L-histidine + ATP = L-histidyl-tRNA(His) + AMP + diphosphate + H(+). This is Histidine--tRNA ligase from Saccharolobus islandicus (strain Y.G.57.14 / Yellowstone #1) (Sulfolobus islandicus).